Reading from the N-terminus, the 376-residue chain is NADPH oxidase organizer 1 (376 aa).

Positions 1–131 constitute a PX domain; it reads MAGPRYPVSV…GFFAPQPLDL (131 aa). SH3 domains are found at residues 163-225 and 237-296; these read LEAQ…EAAP and SSGP…PEGL. Positions 302–376 are disordered; it reads GTGFRGGDDP…DSVPHPTTEQ (75 aa). Pro residues predominate over residues 326–335; the sequence is APPPTVPTRP. The interval 328–337 is proline-rich region; mediates mutually exclusive interactions with itself and NOXA1; sequence PPTVPTRPSP.

In terms of assembly, interacts with NOX1, NOXA1, CYBA/p22phox and NCF2/p67phox. Interacts with SH3PXD2A and SH3PXD2B. In terms of tissue distribution, expressed in testis, small and large intestines, liver, kidney and pancreas. Isoform 3 is mainly expressed in colon. Isoform 1 is preferentially expressed in testis.

It is found in the cell membrane. Its function is as follows. Constitutively potentiates the superoxide-generating activity of NOX1 and NOX3 and is required for the biogenesis of otoconia/otolith, which are crystalline structures of the inner ear involved in the perception of gravity. Isoform 3 is more potent than isoform 1 in activating NOX3. Together with NOXA1, may also substitute to NCF1/p47phox and NCF2/p67phox in supporting the phagocyte NOX2/gp91phox superoxide-generating activity. The chain is NADPH oxidase organizer 1 (NOXO1) from Homo sapiens (Human).